A 411-amino-acid polypeptide reads, in one-letter code: cAMP-dependent protein kinase regulatory subunit (411 aa).

The disordered stretch occupies residues 1–144; that stretch reads MAESAFPSAQ…SWTPPYHEKT (144 aa). Residues 23–159 form a dimerization and phosphorylation region; that stretch reads AAFQKISEED…RLKTAVSSNF (137 aa). A compositionally biased stretch (low complexity) spans 46-58; that stretch reads SANAAAASSSTGS. Acidic residues predominate over residues 85–96; it reads EEDEEGADEFPP. Over residues 119–136 the composition is skewed to polar residues; the sequence is TSVSAESLNPTSAGSDSW. S120 bears the Phosphoserine mark. Residues 160 to 289, E238, R247, 292 to 411, E359, and R368 each bind 3',5'-cyclic AMP; these read LFSH…FLEE and LLSS…PVPA.

Belongs to the cAMP-dependent kinase regulatory chain family. In terms of assembly, tetramer, composed of 2 regulatory (R) and 2 catalytic (C) subunits. In the presence of cAMP it dissociates into 2 active monomeric C subunits and an R dimer.

This Aspergillus niger protein is cAMP-dependent protein kinase regulatory subunit (pkaR).